Reading from the N-terminus, the 209-residue chain is MSGKKRTASSTRWMQEHFDDHYVKLAQKRGLRSRAAFKLEELQEKDQLIRPGMTVVDLGAAPGGWSQIAVKLTGDKGKVIACDILPMDPIVGVDFLQGDFREEKVLEALLTRVGADKVDVVLSDMAPNMSGSDGVDQPRAMYLVELALDMCHQVLAPNGSFAVKVFQGEGFDEYMKAVKDAFKVVKTRKPDSSRARSREVYLVATGYKL.

S-adenosyl-L-methionine contacts are provided by G63, W65, D83, D99, and D124. The active-site Proton acceptor is K164.

This sequence belongs to the class I-like SAM-binding methyltransferase superfamily. RNA methyltransferase RlmE family.

Its subcellular location is the cytoplasm. It catalyses the reaction uridine(2552) in 23S rRNA + S-adenosyl-L-methionine = 2'-O-methyluridine(2552) in 23S rRNA + S-adenosyl-L-homocysteine + H(+). In terms of biological role, specifically methylates the uridine in position 2552 of 23S rRNA at the 2'-O position of the ribose in the fully assembled 50S ribosomal subunit. This Shewanella sp. (strain ANA-3) protein is Ribosomal RNA large subunit methyltransferase E.